A 582-amino-acid polypeptide reads, in one-letter code: Putative frv operon regulatory protein (582 aa).

Residues P20–D39 constitute a DNA-binding region (H-T-H motif). The PTS EIIA type-2 domain maps to R443–G582. H505 is subject to Phosphohistidine; by HPr.

Functionally, could be involved in the regulation of the transcription of the FRV operon. This is Putative frv operon regulatory protein (frvR) from Escherichia coli (strain K12).